We begin with the raw amino-acid sequence, 159 residues long: Mating-type P-specific polypeptide Pi (159 aa).

Positions 103–159 (MTTVRGQCSKCTKPHLMRWLLLHYDNPYPSNSEFYDLSAATGLTRTQLRNWFSNRRR) form a DNA-binding region, homeobox; TALE-type; partial.

It belongs to the TALE/M-ATYP homeobox family.

The protein resides in the nucleus. Mating type proteins are sequence specific DNA-binding proteins that act as master switches in yeast differentiation by controlling gene expression in a cell type-specific fashion. Required for meiosis, but plays no role in conjugation. The chain is Mating-type P-specific polypeptide Pi (matPi) from Schizosaccharomyces kambucha (Fission yeast).